We begin with the raw amino-acid sequence, 350 residues long: Melatonin receptor type 1A-A (350 aa).

Over 1–29 (MFMNGSSLNSSALDPSEQALQRPPWVTTT) the chain is Extracellular. Asparagine 4 and asparagine 9 each carry an N-linked (GlcNAc...) asparagine glycan. Residues 30–50 (LGCFLIFTIVVDILGNLLVIF) traverse the membrane as a helical segment. Over 51–63 (SVYRNKKLQNAGN) the chain is Cytoplasmic. The chain crosses the membrane as a helical span at residues 64 to 84 (IFVVSLAVADLVVAIYPYPLV). The Extracellular portion of the chain corresponds to 85–101 (LTSIFHRGWNLGYMHCQ). A disulfide bridge links cysteine 100 with cysteine 177. A helical membrane pass occupies residues 102–122 (ISGFLMGVSVIGSIFNITGIA). Topologically, residues 123–144 (INCYCYICHSLKYDKLYSDKNS) are cytoplasmic. The helical transmembrane segment at 145-165 (VCYVLLIWALTVLAIVPNLFV) threads the bilayer. The Extracellular segment spans residues 166 to 187 (GSLQYDPRVYSCTFEQSASSAY). The chain crosses the membrane as a helical span at residues 188 to 208 (TIAVVFFHFILPIMIVTYCYL). Residues 209–240 (RIWVLVIQVRRRVKNDNRPKITPHDVRNFVTM) lie on the Cytoplasmic side of the membrane. A helical membrane pass occupies residues 241–261 (FVVFVLFAVCWAPLNFIGLAV). Residues 262–267 (AISPER) are Extracellular-facing. Residues 268–288 (VVPLIPEWLFVASYFMAYFNS) traverse the membrane as a helical segment. The Cytoplasmic segment spans residues 289–350 (CLNAIVYGVL…NNNQVKVDSV (62 aa)).

This sequence belongs to the G-protein coupled receptor 1 family.

The protein resides in the cell membrane. Functionally, high affinity receptor for melatonin. The activity of this receptor is mediated by pertussis toxin sensitive G proteins that inhibits adenylate cyclase activity. The sequence is that of Melatonin receptor type 1A-A (mtnr1aa) from Danio rerio (Zebrafish).